The sequence spans 729 residues: MSKSVVIAEKPSVARDIARVLKCDKKGNGYLEGSKYIVTWALGHLVTLADPESYDVKYKKWNLEDLPMLPERLKLTVIKQTGKQFNAVKSQLLRKDVNEIIVATDAGREGELVARWIIDKVRINKPIKRLWISSVTDKAIKDGFANLKPGRAYDNLYASAVARSEADWYIGLNATRALTTRFNAQLNCGRVQTPTVAMIANREDEIKNFKAQTYYGIEAQTTNQLKLTWQDANGNSRSFNKEKIDGIVKGLDKHNATVMEIDKKQKKSFSPGLYDLTELQRDANKKFGYSAKETLNIMQKLYEQHKVLTYPRTDSRYISSDIVGTLPERLKACGVGEYRPLAHKVLQKPIKANKSFVDDSKVSDHHAIIPTEGYVNFSAFTDKERKIYDLVVKRFLAVLFPAFEYEQLTLRTKVGNETFIARGKTILHAGWKEVYENRFEDDDVTDDVKEQLLPRIEKGDTLTVKLIMQTSGQTKAPARFNEATLLSAMENPTKYMDTQNKQLADTLKSTGGLGTVATRADIIDKLFNSFLIEKRGKDIHITSKGRQLLDLVPEELKSPTLTGEWEQKLEAIAKGKLKKEVFISEMKNYTKEIVSEIKSSDKKYKHDNISTKSCPDCGKPMLEVNGKKGKMLVCQDRECGHRKNVSRTTNARCPQCKKKLELRGEGAGQIFACKCGYREKLSKFQERRKKESGNKADKRDVQKYMKQQKKEEEPLNNPFAEALKKLKFD.

Residues K3 to T136 enclose the Toprim domain. 2 residues coordinate Mg(2+): E9 and D105. The region spanning Y153–V594 is the Topo IA-type catalytic domain. The tract at residues N187–Q192 is interaction with DNA. Y310 serves as the catalytic O-(5'-phospho-DNA)-tyrosine intermediate. The segment covering E686–E713 has biased composition (basic and acidic residues). A disordered region spans residues E686–P718.

This sequence belongs to the type IA topoisomerase family. Mg(2+) serves as cofactor.

It catalyses the reaction ATP-independent breakage of single-stranded DNA, followed by passage and rejoining.. Releases the supercoiling and torsional tension of DNA, which is introduced during the DNA replication and transcription, by transiently cleaving and rejoining one strand of the DNA duplex. Introduces a single-strand break via transesterification at a target site in duplex DNA. The scissile phosphodiester is attacked by the catalytic tyrosine of the enzyme, resulting in the formation of a DNA-(5'-phosphotyrosyl)-enzyme intermediate and the expulsion of a 3'-OH DNA strand. The free DNA strand then undergoes passage around the unbroken strand, thus removing DNA supercoils. Finally, in the religation step, the DNA 3'-OH attacks the covalent intermediate to expel the active-site tyrosine and restore the DNA phosphodiester backbone. The polypeptide is DNA topoisomerase 3 (Bacillus cereus (strain ATCC 10987 / NRS 248)).